The sequence spans 904 residues: DNA polymerase I (904 aa).

Positions 186 to 279 (TPRQYPDFAA…DTLRLQPWDR (94 aa)) constitute a 5'-3' exonuclease domain. Positions 317-493 (RGGALAPGTV…LADALDAELA (177 aa)) constitute a 3'-5' exonuclease domain.

Belongs to the DNA polymerase type-A family. Single-chain monomer with multiple functions.

It catalyses the reaction DNA(n) + a 2'-deoxyribonucleoside 5'-triphosphate = DNA(n+1) + diphosphate. Functionally, in addition to polymerase activity, this DNA polymerase exhibits 3'-5' and 5'-3' exonuclease activity. This Mycobacterium bovis (strain ATCC BAA-935 / AF2122/97) protein is DNA polymerase I (polA).